The sequence spans 944 residues: UvrABC system protein A (944 aa).

Residue 33-40 (GLSGSGKS) participates in ATP binding. Residues 252–279 (CPICGFSIGELEPRMFSFNSPFGACPTC) form a C4-type zinc finger. ABC transporter domains lie at 309–587 (WEPT…KKSL) and 607–935 (ITDR…QYLK). Residue 639-646 (GVSGSGKS) participates in ATP binding. The C4-type zinc-finger motif lies at 738 to 764 (CEACKGDGIIKIEMHFLPDVYVPCEVC).

The protein belongs to the ABC transporter superfamily. UvrA family. In terms of assembly, forms a heterotetramer with UvrB during the search for lesions.

It is found in the cytoplasm. The UvrABC repair system catalyzes the recognition and processing of DNA lesions. UvrA is an ATPase and a DNA-binding protein. A damage recognition complex composed of 2 UvrA and 2 UvrB subunits scans DNA for abnormalities. When the presence of a lesion has been verified by UvrB, the UvrA molecules dissociate. This is UvrABC system protein A from Staphylococcus epidermidis (strain ATCC 12228 / FDA PCI 1200).